We begin with the raw amino-acid sequence, 123 residues long: MIQEQTMLNVADNSGARRVMCIKVLGGSHRRYAGVGDIIKITIKEAIPRGKVKKGDVLKAVVVRTKKGVRRPDGSVIRFDGNACVLLNNNSEQPIGTRIFGPVTRELRSEKFMKIISLAPEVL.

This sequence belongs to the universal ribosomal protein uL14 family. As to quaternary structure, part of the 50S ribosomal subunit. Forms a cluster with proteins L3 and L19. In the 70S ribosome, L14 and L19 interact and together make contacts with the 16S rRNA in bridges B5 and B8.

Binds to 23S rRNA. Forms part of two intersubunit bridges in the 70S ribosome. The chain is Large ribosomal subunit protein uL14 from Escherichia coli O139:H28 (strain E24377A / ETEC).